We begin with the raw amino-acid sequence, 76 residues long: Large ribosomal subunit protein uL30 (76 aa).

The protein belongs to the universal ribosomal protein uL30 family. Part of the 50S ribosomal subunit.

The chain is Large ribosomal subunit protein uL30 from Anaeromyxobacter dehalogenans (strain 2CP-1 / ATCC BAA-258).